A 125-amino-acid chain; its full sequence is MIYGIGTDLVETSRITRLLEKYGERFARRLLTDEEWPEYAKSMQPAMFLAKRFAAKEALAKAFGTGIRHPVSLSHIGVTHDTLGKPYFKFHPELHTLVQNEGITRHHLSISDELNLACAFVILEK.

The Mg(2+) site is built by aspartate 8 and glutamate 57.

It belongs to the P-Pant transferase superfamily. AcpS family. It depends on Mg(2+) as a cofactor.

It localises to the cytoplasm. The enzyme catalyses apo-[ACP] + CoA = holo-[ACP] + adenosine 3',5'-bisphosphate + H(+). Functionally, transfers the 4'-phosphopantetheine moiety from coenzyme A to a Ser of acyl-carrier-protein. This chain is Holo-[acyl-carrier-protein] synthase, found in Nitrosospira multiformis (strain ATCC 25196 / NCIMB 11849 / C 71).